A 150-amino-acid chain; its full sequence is Large ribosomal subunit protein bL9 (150 aa).

Belongs to the bacterial ribosomal protein bL9 family.

Its function is as follows. Binds to the 23S rRNA. The protein is Large ribosomal subunit protein bL9 of Arthrobacter sp. (strain FB24).